A 344-amino-acid polypeptide reads, in one-letter code: Dihydroorotase (344 aa).

Residues H13 and H15 each contribute to the Zn(2+) site. Substrate-binding positions include 15–17 and N41; that span reads HFR. K98, H135, and H173 together coordinate Zn(2+). An N6-carboxylysine modification is found at K98. Residue H135 participates in substrate binding. L218 contacts substrate. Zn(2+) is bound at residue D246. D246 is a catalytic residue. Residues H250 and A262 each contribute to the substrate site.

Belongs to the metallo-dependent hydrolases superfamily. DHOase family. Class II DHOase subfamily. In terms of assembly, homodimer. Requires Zn(2+) as cofactor.

The enzyme catalyses (S)-dihydroorotate + H2O = N-carbamoyl-L-aspartate + H(+). It participates in pyrimidine metabolism; UMP biosynthesis via de novo pathway; (S)-dihydroorotate from bicarbonate: step 3/3. In terms of biological role, catalyzes the reversible cyclization of carbamoyl aspartate to dihydroorotate. In Shewanella woodyi (strain ATCC 51908 / MS32), this protein is Dihydroorotase.